A 334-amino-acid polypeptide reads, in one-letter code: Putative transport protein MTH_1211 (334 aa).

The next 8 helical transmembrane spans lie at 24-44, 60-80, 84-104, 131-151, 189-209, 220-240, 255-275, and 289-309; these read AIVVYPLWTMLFLGAVFAYIV, VSIILAMIVVIMPLVGILVFT, IINSAPSLLSLAGSIHVPGAG, YVVAILQSVPMISLQLFVFLS, VLLSIFYGHFLTALAIGLMAA, AILLGIMTGLFQLIPVIGPWA, ILRGVLVLIFGLFLSTIDIYL, and MIFLVGFLGGPVVWGVAGFIV.

The protein belongs to the autoinducer-2 exporter (AI-2E) (TC 2.A.86) family.

The protein localises to the cell membrane. This chain is Putative transport protein MTH_1211, found in Methanothermobacter thermautotrophicus (strain ATCC 29096 / DSM 1053 / JCM 10044 / NBRC 100330 / Delta H) (Methanobacterium thermoautotrophicum).